Here is a 327-residue protein sequence, read N- to C-terminus: Zinc transport protein ZntB (327 aa).

Over 1-271 (MDVVEGKALQ…AMNRRTYTMS (271 aa)) the chain is Cytoplasmic. Residues 272 to 292 (LLAMVFLPTTFLTGLFGVNLG) form a helical membrane-spanning segment. The Periplasmic segment spans residues 293–300 (GIPGNTDA). A helical membrane pass occupies residues 301-321 (FGFTIFCMMLVVLVLSVAWWL). Topologically, residues 322 to 327 (KRSKWL) are cytoplasmic.

It belongs to the CorA metal ion transporter (MIT) (TC 1.A.35) family.

The protein resides in the cell inner membrane. The enzyme catalyses Zn(2+)(out) + H(+)(out) = Zn(2+)(in) + H(+)(in). Functionally, zinc transporter. Acts as a Zn(2+):proton symporter, which likely mediates zinc ion uptake. This Yersinia pseudotuberculosis serotype O:1b (strain IP 31758) protein is Zinc transport protein ZntB.